A 499-amino-acid chain; its full sequence is Putative sperm motility kinase W (499 aa).

In terms of domain architecture, Protein kinase spans 14–262; the sequence is YKVLFTLGHG…IEDIERHPWV (249 aa). Residues 20-28 and K43 contribute to the ATP site; that span reads LGHGSFGTV. D133 serves as the catalytic Proton acceptor. The UBA domain maps to 274–314; that stretch reads DPDYNIIEMLCGMGFDANEILESLQRKKYNESMGAYLILKA.

Belongs to the protein kinase superfamily. CAMK Ser/Thr protein kinase family. Smok subfamily.

It catalyses the reaction L-seryl-[protein] + ATP = O-phospho-L-seryl-[protein] + ADP + H(+). It carries out the reaction L-threonyl-[protein] + ATP = O-phospho-L-threonyl-[protein] + ADP + H(+). May play a role in sperm motility, especially in the regulation of flagellar function. This is Putative sperm motility kinase W from Mus musculus (Mouse).